Consider the following 256-residue polypeptide: Phosphatidylglycerol--prolipoprotein diacylglyceryl transferase (256 aa).

Transmembrane regions (helical) follow at residues 19 to 39 (VHWY…LGYW), 56 to 76 (LIFY…MLFY), and 91 to 111 (IWEG…AAWL). A 1,2-diacyl-sn-glycero-3-phospho-(1'-sn-glycerol) is bound at residue Arg139. A helical transmembrane segment spans residues 231-251 (FGWLTMGQVLSIPMLLIGIWL).

It belongs to the Lgt family.

It is found in the cell inner membrane. The enzyme catalyses L-cysteinyl-[prolipoprotein] + a 1,2-diacyl-sn-glycero-3-phospho-(1'-sn-glycerol) = an S-1,2-diacyl-sn-glyceryl-L-cysteinyl-[prolipoprotein] + sn-glycerol 1-phosphate + H(+). The protein operates within protein modification; lipoprotein biosynthesis (diacylglyceryl transfer). In terms of biological role, catalyzes the transfer of the diacylglyceryl group from phosphatidylglycerol to the sulfhydryl group of the N-terminal cysteine of a prolipoprotein, the first step in the formation of mature lipoproteins. The sequence is that of Phosphatidylglycerol--prolipoprotein diacylglyceryl transferase from Legionella pneumophila subsp. pneumophila (strain Philadelphia 1 / ATCC 33152 / DSM 7513).